The chain runs to 249 residues: Proteasome subunit alpha type-7 (249 aa).

This sequence belongs to the peptidase T1A family. The 26S proteasome consists of a 20S proteasome core and two 19S regulatory subunits. The 20S proteasome core is composed of 28 subunits that are arranged in four stacked rings, resulting in a barrel-shaped structure. The two end rings are each formed by seven alpha subunits, and the two central rings are each formed by seven beta subunits. The catalytic chamber with the active sites is on the inside of the barrel.

It localises to the cytoplasm. The protein resides in the nucleus. The proteasome is a multicatalytic proteinase complex which is characterized by its ability to cleave peptides with Arg, Phe, Tyr, Leu, and Glu adjacent to the leaving group at neutral or slightly basic pH. The proteasome has an ATP-dependent proteolytic activity. This is Proteasome subunit alpha type-7 (PAD1) from Cicer arietinum (Chickpea).